The chain runs to 184 residues: Ras-related protein O-Krev (184 aa).

10-17 (GSGGVGKS) contributes to the GTP binding site. Positions 32 to 40 (YDPTIEDSY) match the Effector region motif. Residues 57–61 (DTAGT) and 116–119 (NKCD) contribute to the GTP site. Cysteine methyl ester is present on Cys181. Cys181 carries the S-geranylgeranyl cysteine lipid modification. The propeptide at 182–184 (TLL) is removed in mature form.

The protein belongs to the small GTPase superfamily. Ras family.

It localises to the cell membrane. It catalyses the reaction GTP + H2O = GDP + phosphate + H(+). The chain is Ras-related protein O-Krev from Diplobatis ommata (Ocellated electric ray).